A 218-amino-acid polypeptide reads, in one-letter code: Chymotrypsin-2 (218 aa).

In terms of domain architecture, Peptidase S1 spans 1-218 (IVGGTDAPRG…FLDWIQKNQL (218 aa)). Cys-25 and Cys-40 are oxidised to a cystine. Residues His-39 and Asp-84 each act as charge relay system in the active site. 2 cysteine pairs are disulfide-bonded: Cys-148–Cys-161 and Cys-171–Cys-195. The active-site Charge relay system is Ser-175.

Belongs to the peptidase S1 family.

Its subcellular location is the secreted. The protein resides in the extracellular space. It carries out the reaction Preferential cleavage: Tyr-|-Xaa, Trp-|-Xaa, Phe-|-Xaa, Leu-|-Xaa.. The chain is Chymotrypsin-2 from Vespa crabro (European hornet).